The following is a 274-amino-acid chain: Octanoyltransferase LipM (274 aa).

In terms of domain architecture, BPL/LPL catalytic spans 32–244 (GEVPPTLRFY…GFARALGLTL (213 aa)). C146 (acyl-thioester intermediate) is an active-site residue.

It belongs to the octanoyltransferase LipM family. Monomer.

The enzyme catalyses octanoyl-[ACP] + L-lysyl-[protein] = N(6)-octanoyl-L-lysyl-[protein] + holo-[ACP] + H(+). It functions in the pathway protein modification; protein lipoylation via endogenous pathway; protein N(6)-(lipoyl)lysine from octanoyl-[acyl-carrier-protein]. In terms of biological role, catalyzes the transfer of endogenously produced octanoic acid from octanoyl-acyl-carrier-protein onto the lipoyl domain of GcvH, an intermediate carrier during protein lipoylation. In Symbiobacterium thermophilum (strain DSM 24528 / JCM 14929 / IAM 14863 / T), this protein is Octanoyltransferase LipM.